The following is a 77-amino-acid chain: Ras-related C3 botulinum toxin substrate 1 (77 aa).

22–24 (KLD) provides a ligand contact to GTP. Lys53 is covalently cross-linked (Glycyl lysine isopeptide (Lys-Gly) (interchain with G-Cter in ubiquitin)). Residue 65–66 (AL) coordinates GTP.

Belongs to the small GTPase superfamily. Rho family. As to quaternary structure, interacts with NISCH. Interacts with PIP5K1A. Interacts with the GTP-bound form of RAB7A. Interacts with SRGAP2. Interacts with CYFIP1/SRA-1. Interacts with PLXNB3. Interacts with ARHGDIA; the interaction is induced by SEMA5A, mediated through PLXNB3 and inactivates and stabilizes RAC1. Interacts (GTP-bound form preferentially) with PKN2 (via the REM repeats); the interaction stimulates autophosphorylation and phosphorylation of PKN2. Interacts with the GEF proteins PREX1, RASGRF2, FARP1, FARP2, DOCK1, DOCK2 and DOCK7, which promote the exchange between GDP and GTP, and therefore activate it. Interacts with PARD6A, PARD6B and PARD6G in a GTP-dependent manner. Part of a quaternary complex containing PARD3, some PARD6 protein (PARD6A, PARD6B or PARD6G) and some atypical PKC protein (PRKCI or PRKCZ), which plays a central role in epithelial cell polarization. Found in a trimeric complex composed of DOCK1 and ELMO1, which plays a central role in phagocytosis of apoptotic cells. Interacts with RALBP1 via its effector domain. Interacts with PLXNB1. Part of a complex with MAP2K3, MAP3K3, CCM2 and DEF6. Interacts with BAIAP2, BAIAP2L1 and DEF6. Interacts with Y.pseudotuberculosis YPKA and PLCB2. Interacts with NOXA1. Interacts with ARHGEF2. Interacts with TBC1D2. Interacts with UNKL. Interacts with USP6. Interacts with SPATA13. Interacts with ARHGEF16; mediates activation of RAC1 by EPHA2. Interacts with ITGB4. Interacts with S100A8 and calprotectin (S100A8/9). Interacts with PACSIN2. Interacts (when active) with PPP5C (via TPR repeats); activates PPP5C phosphatase activity and translocates PPP5C to the cell membrane. Interacts with RAPH1 (via Ras associating and PH domains). Interacts with MTSS2 (via IMD domain); this interaction may be important to potentiate PDGF-induced RAC1 activation. Interacts with PAK2. Interacts (GTP-bound form) with SH3RF1 and SH3RF3. Found in a complex with SH3RF1, MAPK8IP1/JIP1, MAP3K11/MLK3, MAP2K7/MKK7 and MAPK8/JNK1. Interacts (both active GTP- or inactive GDP-bound forms) with SH3RF2. Interacts (GTP-bound form preferentially) with CYRIB. Interacts with DOCK4 (via DOCKER domain); functions as a guanine nucleotide exchange factor (GEF) for RAC1. Interacts with GARRE1. Interacts with RAP1GDS1. May interact with ARHGAP36. Interacts with DSG3; the interaction is required for DSG3 translocation to cell-cell junctions, organization of cortical F-actin bundles and actin anchoring at cell-cell junctions. Component of the phagocyte NADPH oxidase complex composed of an obligatory core heterodimer formed by the membrane proteins CYBA and CYBB and the cytosolic regulatory subunits NCF1/p47-phox, NCF2/p67-phox, NCF4/p40-phox and the small GTPase RAC1 or RAC2. Interacts with NCF2. The N-terminus is blocked. Post-translationally, GTP-bound active form is ubiquitinated by HACE1, leading to its degradation by the proteasome.

It localises to the cytoplasm. The protein resides in the membrane. It is found in the melanosome. Its subcellular location is the cell projection. The protein localises to the lamellipodium. It localises to the dendrite. The protein resides in the synapse. It is found in the nucleus. It catalyses the reaction GTP + H2O = GDP + phosphate + H(+). Its activity is regulated as follows. Regulated by guanine nucleotide exchange factors (GEFs) which promote the exchange of bound GDP for free GTP, GTPase activating proteins (GAPs) which increase the GTP hydrolysis activity, and GDP dissociation inhibitors which inhibit the dissociation of the nucleotide from the GTPase. GTP hydrolysis is stimulated by ARHGAP30. Functionally, plasma membrane-associated small GTPase which cycles between active GTP-bound and inactive GDP-bound states. In its active state, binds to a variety of effector proteins to regulate cellular responses such as secretory processes, phagocytosis of apoptotic cells, epithelial cell polarization, neurons adhesion, migration and differentiation, and growth-factor induced formation of membrane ruffles. Rac1 p21/rho GDI heterodimer is the active component of the cytosolic factor sigma 1, which is involved in stimulation of the NADPH oxidase activity in macrophages. Essential for the SPATA13-mediated regulation of cell migration and adhesion assembly and disassembly. Stimulates PKN2 kinase activity. In concert with RAB7A, plays a role in regulating the formation of RBs (ruffled borders) in osteoclasts. In podocytes, promotes nuclear shuttling of NR3C2; this modulation is required for a proper kidney functioning. Required for atypical chemokine receptor ACKR2-induced LIMK1-PAK1-dependent phosphorylation of cofilin (CFL1) and for up-regulation of ACKR2 from endosomal compartment to cell membrane, increasing its efficiency in chemokine uptake and degradation. In neurons, is involved in dendritic spine formation and synaptic plasticity. In hippocampal neurons, involved in spine morphogenesis and synapse formation, through local activation at synapses by guanine nucleotide exchange factors (GEFs), such as ARHGEF6/ARHGEF7/PIX. In synapses, seems to mediate the regulation of F-actin cluster formation performed by SHANK3. In neurons, plays a crucial role in regulating GABA(A) receptor synaptic stability and hence GABAergic inhibitory synaptic transmission through its role in PAK1 activation and eventually F-actin stabilization. Required for DSG3 translocation to cell-cell junctions, DSG3-mediated organization of cortical F-actin bundles and anchoring of actin at cell junctions; via interaction with DSG3. Subunit of the phagocyte NADPH oxidase complex that mediates the transfer of electrons from cytosolic NADPH to O2 to produce the superoxide anion (O2(-)). In Cavia porcellus (Guinea pig), this protein is Ras-related C3 botulinum toxin substrate 1.